Here is a 197-residue protein sequence, read N- to C-terminus: Small ribosomal subunit protein uS4A (197 aa).

The S4 RNA-binding domain occupies 107-181 (RRLQTQVYKL…VARRNAARKA (75 aa)). A disordered region spans residues 160-197 (PTSPFGGARPGRVARRNAARKAEASGEAADEADEADEE). A Glycyl lysine isopeptide (Lys-Gly) (interchain with G-Cter in ubiquitin) cross-link involves residue lysine 180. At serine 184 the chain carries Phosphoserine. Positions 187 to 197 (AADEADEADEE) are enriched in acidic residues.

It belongs to the universal ribosomal protein uS4 family. In terms of assembly, component of the small ribosomal subunit (SSU). Mature yeast ribosomes consist of a small (40S) and a large (60S) subunit. The 40S small subunit contains 1 molecule of ribosomal RNA (18S rRNA) and 33 different proteins (encoded by 57 genes). The large 60S subunit contains 3 rRNA molecules (25S, 5.8S and 5S rRNA) and 46 different proteins (encoded by 81 genes). Interacts with snoRNA U3. uS11 interacts with MPP10. Component of the ribosomal small subunit (SSU) processome composed of at least 40 protein subunits and snoRNA U3.

The protein resides in the cytoplasm. Its subcellular location is the nucleus. The protein localises to the nucleolus. Functionally, component of the ribosome, a large ribonucleoprotein complex responsible for the synthesis of proteins in the cell. The small ribosomal subunit (SSU) binds messenger RNAs (mRNAs) and translates the encoded message by selecting cognate aminoacyl-transfer RNA (tRNA) molecules. The large subunit (LSU) contains the ribosomal catalytic site termed the peptidyl transferase center (PTC), which catalyzes the formation of peptide bonds, thereby polymerizing the amino acids delivered by tRNAs into a polypeptide chain. The nascent polypeptides leave the ribosome through a tunnel in the LSU and interact with protein factors that function in enzymatic processing, targeting, and the membrane insertion of nascent chains at the exit of the ribosomal tunnel. uS4 is involved in nucleolar processing of pre-18S ribosomal RNA and ribosome assembly. This Saccharomyces cerevisiae (strain ATCC 204508 / S288c) (Baker's yeast) protein is Small ribosomal subunit protein uS4A.